Consider the following 219-residue polypeptide: Interleukin-12 subunit alpha (219 aa).

Residues 1 to 22 (MCPARSLLLVATLVLLDHLSLA) form the signal peptide. Cystine bridges form between C37–C110, C64–C196, and C85–C123. Residues N93 and N107 are each glycosylated (N-linked (GlcNAc...) asparagine).

Belongs to the IL-6 superfamily. As to quaternary structure, heterodimer with IL12B; disulfide-linked. This heterodimer is known as interleukin IL-12. Heterodimer with EBI3/IL27B; not disulfide-linked. This heterodimer is known as interleukin IL-35. Interacts with NBR1; this interaction promotes IL-12 secretion.

The protein resides in the secreted. Its function is as follows. Heterodimerizes with IL12B to form the IL-12 cytokine or with EBI3/IL27B to form the IL-35 cytokine. IL-12 is primarily produced by professional antigen-presenting cells (APCs) such as B-cells and dendritic cells (DCs) as well as macrophages and granulocytes and regulates T-cell and natural killer-cell responses, induces the production of interferon-gamma (IFN-gamma), favors the differentiation of T-helper 1 (Th1) cells and is an important link between innate resistance and adaptive immunity. Mechanistically, exerts its biological effects through a receptor composed of IL12R1 and IL12R2 subunits. Binding to the receptor results in the rapid tyrosine phosphorylation of a number of cellular substrates including the JAK family kinases TYK2 and JAK2. In turn, recruited STAT4 gets phosphorylated and translocates to the nucleus where it regulates cytokine/growth factor responsive genes. As part of IL-35, plays essential roles in maintaining the immune homeostasis of the liver microenvironment and also functions as an immune-suppressive cytokine. Mediates biological events through unconventional receptors composed of IL12RB2 and gp130/IL6ST heterodimers or homodimers. Signaling requires the transcription factors STAT1 and STAT4, which form a unique heterodimer that binds to distinct DNA sites. This is Interleukin-12 subunit alpha (IL12A) from Homo sapiens (Human).